Reading from the N-terminus, the 933-residue chain is Probable Rho-type GTPase-activating protein 4 (933 aa).

2 consecutive LIM zinc-binding domains span residues 22 to 80 and 81 to 129; these read CFCI…LCVD and ICNG…CLPC. 2 disordered regions span residues 181–200 and 304–338; these read PSSV…NSLR and ENGT…STTT. Positions 325–338 are enriched in polar residues; the sequence is RSSTMNYKSVSTTT. Ser353 is modified (phosphoserine). 3 disordered regions span residues 415 to 435, 605 to 628, and 641 to 660; these read RLSS…NYEA, SSSF…SPRE, and GFRP…KRNS. Polar residues predominate over residues 619-628; it reads RTISTPSPRE. Ser625 is subject to Phosphoserine. Residues 643-652 are compositionally biased toward basic and acidic residues; the sequence is RPKDNKDKES. Ser738 and Ser740 each carry phosphoserine. A Rho-GAP domain is found at 753 to 932; the sequence is NRLTLLRVPT…FLIDHVHEVF (180 aa).

In terms of biological role, GTPase-activating protein for Rho-type proteins. This is Probable Rho-type GTPase-activating protein 4 (rga4) from Schizosaccharomyces pombe (strain 972 / ATCC 24843) (Fission yeast).